A 518-amino-acid polypeptide reads, in one-letter code: Putative cytochrome P450 CYP13A7 (518 aa).

Residue cysteine 464 coordinates heme.

It belongs to the cytochrome P450 family. Heme is required as a cofactor.

Functionally, cytochromes P450 are a group of heme-thiolate monooxygenases. They oxidize a variety of structurally unrelated compounds, including steroids, fatty acids, and xenobiotics. This Caenorhabditis elegans protein is Putative cytochrome P450 CYP13A7 (cyp-13A7).